Reading from the N-terminus, the 318-residue chain is Thymidylate synthase (318 aa).

DUMP contacts are provided by residues Arg25 and 180-181 (RR). The Nucleophile role is filled by Cys200. DUMP contacts are provided by residues 220-223 (RSGD), Asn231, and 261-263 (HIY). Residue Asp223 participates in (6R)-5,10-methylene-5,6,7,8-tetrahydrofolate binding. Ala317 is a binding site for (6R)-5,10-methylene-5,6,7,8-tetrahydrofolate.

The protein belongs to the thymidylate synthase family. Bacterial-type ThyA subfamily. Homodimer.

It is found in the cytoplasm. It catalyses the reaction dUMP + (6R)-5,10-methylene-5,6,7,8-tetrahydrofolate = 7,8-dihydrofolate + dTMP. It functions in the pathway pyrimidine metabolism; dTTP biosynthesis. Catalyzes the reductive methylation of 2'-deoxyuridine-5'-monophosphate (dUMP) to 2'-deoxythymidine-5'-monophosphate (dTMP) while utilizing 5,10-methylenetetrahydrofolate (mTHF) as the methyl donor and reductant in the reaction, yielding dihydrofolate (DHF) as a by-product. This enzymatic reaction provides an intracellular de novo source of dTMP, an essential precursor for DNA biosynthesis. This is Thymidylate synthase from Bacillus thuringiensis subsp. konkukian (strain 97-27).